Reading from the N-terminus, the 233-residue chain is 28 kDa ribonucleoprotein, chloroplastic (233 aa).

Residues 1–16 (CVAQTSEWEQEGSTNA) show a composition bias toward polar residues. The disordered stretch occupies residues 1–52 (CVAQTSEWEQEGSTNAVLEGESDPEGAVSWGSETQVSDEGGVEGGQGFSEPP). 2 consecutive RRM domains span residues 55 to 133 (AKLF…KAAP) and 149 to 227 (CRVY…VAEE).

The protein localises to the plastid. It localises to the chloroplast. Its function is as follows. Probably involved in the 3'-end processing of chloroplast mRNA's. The protein is 28 kDa ribonucleoprotein, chloroplastic of Spinacia oleracea (Spinach).